The chain runs to 432 residues: Serine--tRNA ligase (432 aa).

238-240 (TAE) provides a ligand contact to L-serine. 269–271 (RSE) is an ATP binding site. Glu292 lines the L-serine pocket. Residue 357-360 (EISS) participates in ATP binding. L-serine is bound at residue Ser393.

Belongs to the class-II aminoacyl-tRNA synthetase family. Type-1 seryl-tRNA synthetase subfamily. As to quaternary structure, homodimer. The tRNA molecule binds across the dimer.

It is found in the cytoplasm. It carries out the reaction tRNA(Ser) + L-serine + ATP = L-seryl-tRNA(Ser) + AMP + diphosphate + H(+). The enzyme catalyses tRNA(Sec) + L-serine + ATP = L-seryl-tRNA(Sec) + AMP + diphosphate + H(+). The protein operates within aminoacyl-tRNA biosynthesis; selenocysteinyl-tRNA(Sec) biosynthesis; L-seryl-tRNA(Sec) from L-serine and tRNA(Sec): step 1/1. Catalyzes the attachment of serine to tRNA(Ser). Is also able to aminoacylate tRNA(Sec) with serine, to form the misacylated tRNA L-seryl-tRNA(Sec), which will be further converted into selenocysteinyl-tRNA(Sec). This Hyphomonas neptunium (strain ATCC 15444) protein is Serine--tRNA ligase.